A 297-amino-acid chain; its full sequence is 2-phospho-L-lactate transferase (297 aa).

Aspartate 49 serves as a coordination point for 7,8-didemethyl-8-hydroxy-5-deazariboflavin.

The protein belongs to the CofD family. Homodimer. Requires Mg(2+) as cofactor.

The enzyme catalyses (2S)-lactyl-2-diphospho-5'-guanosine + 7,8-didemethyl-8-hydroxy-5-deazariboflavin = oxidized coenzyme F420-0 + GMP + H(+). It participates in cofactor biosynthesis; coenzyme F420 biosynthesis. Functionally, catalyzes the transfer of the 2-phospholactate moiety from (2S)-lactyl-2-diphospho-5'-guanosine to 7,8-didemethyl-8-hydroxy-5-deazariboflavin (FO) with the formation of oxidized coenzyme F420-0 and GMP. This Methanospirillum hungatei JF-1 (strain ATCC 27890 / DSM 864 / NBRC 100397 / JF-1) protein is 2-phospho-L-lactate transferase.